The following is a 662-amino-acid chain: uncharacterized protein (662 aa).

Residues S145, E164, W173, D184, and Y190 each contribute to the FAD site. The disordered stretch occupies residues 638 to 662 (SRLETSGVPREGVQRPGSRLRRRPS).

The protein belongs to the FAD-binding monooxygenase family. It depends on FAD as a cofactor.

This is an uncharacterized protein from Sinorhizobium fredii (strain NBRC 101917 / NGR234).